The following is a 366-amino-acid chain: tRNA/tmRNA (uracil-C(5))-methyltransferase (366 aa).

Positions 190, 218, 223, 239, and 299 each coordinate S-adenosyl-L-methionine. Cys-324 acts as the Nucleophile in catalysis. Glu-358 serves as the catalytic Proton acceptor.

Belongs to the class I-like SAM-binding methyltransferase superfamily. RNA M5U methyltransferase family. TrmA subfamily.

It catalyses the reaction uridine(54) in tRNA + S-adenosyl-L-methionine = 5-methyluridine(54) in tRNA + S-adenosyl-L-homocysteine + H(+). It carries out the reaction uridine(341) in tmRNA + S-adenosyl-L-methionine = 5-methyluridine(341) in tmRNA + S-adenosyl-L-homocysteine + H(+). Its function is as follows. Dual-specificity methyltransferase that catalyzes the formation of 5-methyluridine at position 54 (m5U54) in all tRNAs, and that of position 341 (m5U341) in tmRNA (transfer-mRNA). The sequence is that of tRNA/tmRNA (uracil-C(5))-methyltransferase from Salmonella paratyphi C (strain RKS4594).